The following is a 375-amino-acid chain: Histidine biosynthesis bifunctional protein HisB (375 aa).

The segment at methionine 1–proline 168 is histidinol-phosphatase. The Nucleophile role is filled by aspartate 8. Positions 8, 10, and 128 each coordinate Mg(2+). Catalysis depends on aspartate 10, which acts as the Proton donor. Positions arginine 169–leucine 375 are imidazoleglycerol-phosphate dehydratase.

The protein in the N-terminal section; belongs to the histidinol-phosphatase family. It in the C-terminal section; belongs to the imidazoleglycerol-phosphate dehydratase family. The cofactor is Mg(2+).

Its subcellular location is the cytoplasm. The enzyme catalyses D-erythro-1-(imidazol-4-yl)glycerol 3-phosphate = 3-(imidazol-4-yl)-2-oxopropyl phosphate + H2O. It catalyses the reaction L-histidinol phosphate + H2O = L-histidinol + phosphate. The protein operates within amino-acid biosynthesis; L-histidine biosynthesis; L-histidine from 5-phospho-alpha-D-ribose 1-diphosphate: step 6/9. It functions in the pathway amino-acid biosynthesis; L-histidine biosynthesis; L-histidine from 5-phospho-alpha-D-ribose 1-diphosphate: step 8/9. In Xanthomonas campestris pv. campestris (strain 8004), this protein is Histidine biosynthesis bifunctional protein HisB.